Reading from the N-terminus, the 262-residue chain is Undecaprenyl-diphosphatase (262 aa).

The next 8 helical transmembrane spans lie at 15–35 (LTEWLPISSSGHLVLLQIILL), 38–58 (SSAAFIALVHAGTLLAVIVAF), 91–111 (LYILIGTVPVAVLGLALAKYV), 114–134 (IFGSSKIVGVGLLITAALLYS), 149–169 (ALIVGLAQSIAIFPGISRSGA), 189–209 (FLLSIPALTGFLILELIVSPA), 219–239 (VGLLSSFITGLIAIKFLLSII), and 242–262 (GRLHLFSYYCVIVGIAILSLL).

This sequence belongs to the UppP family.

The protein localises to the cell membrane. It catalyses the reaction di-trans,octa-cis-undecaprenyl diphosphate + H2O = di-trans,octa-cis-undecaprenyl phosphate + phosphate + H(+). In terms of biological role, catalyzes the dephosphorylation of undecaprenyl diphosphate (UPP). This chain is Undecaprenyl-diphosphatase, found in Korarchaeum cryptofilum (strain OPF8).